The following is an 845-amino-acid chain: Complement component C7 (845 aa).

An N-terminal signal peptide occupies residues 1–22 (MQVTSLLILVCFIAAFQVFSRA). The TSP type-1 1 domain maps to 27 to 80 (NCKWDSYGPWSECNGCTKTQTRRRSVAVYGQYGGYPCEGSAFETQSCKPERGCP). 6 cysteine pairs are disulfide-bonded: Cys28-Cys63, Cys39-Cys73, Cys42-Cys79, Cys85-Cys96, Cys91-Cys109, and Cys103-Cys119. In terms of domain architecture, LDL-receptor class A spans 84–120 (GCGDRFRCFSGQCISKSLVCNGDPDCEEDGADEDKCE). One can recognise an MACPF domain in the interval 122-456 (VANPSCNIDK…EYFDEFDPCH (335 aa)). N-linked (GlcNAc...) asparagine glycosylation is present at Asn124. Cys127 and Cys164 form a disulfide bridge. Asn201 is a glycosylation site (N-linked (GlcNAc...) asparagine). 21 disulfide bridges follow: Cys336–Cys353, Cys433–Cys560, Cys455–Cys505, Cys457–Cys473, Cys460–Cys475, Cys477–Cys486, Cys512–Cys545, Cys523–Cys535, Cys571–Cys613, Cys599–Cys626, Cys631–Cys673, Cys659–Cys688, Cys703–Cys714, Cys716–Cys751, Cys722–Cys744, Cys729–Cys764, Cys774–Cys783, Cys777–Cys790, Cys792–Cys826, Cys798–Cys819, and Cys806–Cys839. The EGF-like domain maps to 457 to 487 (CRPCQNGGLAIVVETQCQCLCKPYTFGSACE). Residues 500-549 (DGGWNCWSSWSPCVQGKRTRSRECNNPPPRDDGKSCLGETTESKQCEDQD) form the TSP type-1 2 domain. 2 CCP regions span residues 545 to 615 (CEDQ…RCGE) and 616 to 693 (DLQW…QKAT). 2 consecutive Sushi domains span residues 569–628 (EFCL…HCQK) and 629–690 (LACV…KCVQ). Factor I module (FIM) stretches follow at residues 695–771 (TPPP…SPAE) and 772–844 (KVCG…EEAA). Asn755 carries N-linked (GlcNAc...) asparagine glycosylation.

The protein belongs to the complement C6/C7/C8/C9 family. As to quaternary structure, monomer or dimer; as a C5b-7 complex it can also form multimeric rosettes. Component of the membrane attack complex (MAC), composed of complement C5b, C6, C7, C8A, C8B, C8G and multiple copies of the pore-forming subunit C9. In terms of processing, C-, N- and O-glycosylated. O-glycosylated with core 1 or possibly core 8 glycans.

It localises to the secreted. Its subcellular location is the target cell membrane. With respect to regulation, membrane attack complex (MAC) assembly is inhibited by CD59, thereby protecting self-cells from damage during complement activation. MAC assembly is also inhibited by clusterin (CLU) chaperones that inhibit polymerization of C9. Its function is as follows. Component of the membrane attack complex (MAC), a multiprotein complex activated by the complement cascade, which inserts into a target cell membrane and forms a pore, leading to target cell membrane rupture and cell lysis. The MAC is initiated by proteolytic cleavage of C5 into complement C5b in response to the classical, alternative, lectin and GZMK complement pathways. The complement pathways consist in a cascade of proteins that leads to phagocytosis and breakdown of pathogens and signaling that strengthens the adaptive immune system. C7 serves as a membrane anchor. During MAC assembly, associates with C5b and C6 to form the C5b-7 complex, a key lipophilic precursor of the MAC complex, which associates with the outer leaflet and reduces the energy for membrane bending. The chain is Complement component C7 from Mus musculus (Mouse).